The sequence spans 1022 residues: D-2-hydroxyglutarate dehydrogenase (1022 aa).

The FAD-binding PCMH-type domain maps to Tyr-53 to Leu-286. Positions 407 and 505 each coordinate (R)-2-hydroxyglutarate. The 34-residue stretch at Phe-667 to Arg-700 folds into the 4Fe-4S ferredoxin-type domain. The [4Fe-4S] cluster site is built by Cys-678, Cys-681, Cys-684, and Cys-688.

The protein in the N-terminal section; belongs to the FAD-binding oxidoreductase/transferase type 4 family. Homotetramer. Requires [4Fe-4S] cluster as cofactor. FAD is required as a cofactor.

It catalyses the reaction (R)-2-hydroxyglutarate + A = 2-oxoglutarate + AH2. Activity is completely inhibited by the addition of 0.5 mM Mn(2+), Ni(2+), or Co(2+) and partially inhibited by 0.5 mM Zn(2+). Catalyzes the oxidation of D-2-hydroxyglutarate (D-2-HGA) to 2-oxoglutarate. Appears to be the only D2HGDH in P.ananatis, providing the way to recycle D-2-HGA produced during L-serine synthesis by SerA, by converting it back to 2-oxoglutarate. Is involved in the utilization of D-2-HGA, that can support the growth of P.ananatis as a sole carbon source, although it barely serves as a good substrate. The physiological molecule that functions as the primary electron acceptor during D-2-HGA oxidation by YdiJ in P.ananatis is unknown. Shows strict substrate specificity towards D-2-HGA, since it has no detectable activity on L-2-hydroxyglutarate, L-malate, D-malate, L-lactate, D-lactate, L-tartrate, D-tartrate, L-glycerate, D-glycerate, glutarate, or pyruvate. This Pantoea ananatis (strain AJ13355) protein is D-2-hydroxyglutarate dehydrogenase.